A 290-amino-acid chain; its full sequence is 33 kDa chaperonin (290 aa).

2 disulfide bridges follow: Cys235-Cys237 and Cys268-Cys271.

This sequence belongs to the HSP33 family. Post-translationally, under oxidizing conditions two disulfide bonds are formed involving the reactive cysteines. Under reducing conditions zinc is bound to the reactive cysteines and the protein is inactive.

The protein localises to the cytoplasm. Functionally, redox regulated molecular chaperone. Protects both thermally unfolding and oxidatively damaged proteins from irreversible aggregation. Plays an important role in the bacterial defense system toward oxidative stress. In Streptococcus pyogenes serotype M2 (strain MGAS10270), this protein is 33 kDa chaperonin.